The following is a 720-amino-acid chain: Zinc finger protein 408 (720 aa).

The tract at residues 201-350 is disordered; that stretch reads VQQEVASPGE…GPAGSSPKQG (150 aa). Residues 275-285 show a composition bias toward polar residues; the sequence is LQSNSATQQDP. The segment covering 287–296 has biased composition (low complexity); the sequence is GSGASFSSSA. A Phosphothreonine modification is found at threonine 322. 10 consecutive C2H2-type zinc fingers follow at residues 353–375, 381–403, 409–431, 437–459, 468–490, 496–518, 524–546, 551–573, 579–601, and 607–629; these read YRCG…AFVH, FLCT…MLGH, FPCP…QVVH, FACD…RKTH, CPCP…MRLH, FLCP…LRLH, YRCP…LISH, HLCP…ERLH, FPCP…LKSH, and YRCP…QLSH.

Highest expression is observed in adult retina; abundantly expressed in the fetal eye. In the retina, it is detected in the outer nuclear layer, especially cone and rod photoreceptor cells, ganglion cell layer and both outer and inner plexiform layers (at protein level). Expressed in retinal blood vessels (at protein level).

The protein resides in the nucleus. May be involved in transcriptional regulation. The polypeptide is Zinc finger protein 408 (ZNF408) (Homo sapiens (Human)).